The chain runs to 701 residues: DNA-directed RNA polymerase subunit beta' (701 aa).

Residues Cys76, Cys78, Cys94, and Cys97 each coordinate Zn(2+). Residues Asp511, Asp513, and Asp515 each contribute to the Mg(2+) site.

Belongs to the RNA polymerase beta' chain family. RpoC1 subfamily. In plastids the minimal PEP RNA polymerase catalytic core is composed of four subunits: alpha, beta, beta', and beta''. When a (nuclear-encoded) sigma factor is associated with the core the holoenzyme is formed, which can initiate transcription. It depends on Mg(2+) as a cofactor. Zn(2+) is required as a cofactor.

Its subcellular location is the plastid. It localises to the chloroplast. The enzyme catalyses RNA(n) + a ribonucleoside 5'-triphosphate = RNA(n+1) + diphosphate. In terms of biological role, DNA-dependent RNA polymerase catalyzes the transcription of DNA into RNA using the four ribonucleoside triphosphates as substrates. This chain is DNA-directed RNA polymerase subunit beta', found in Pelargonium hortorum (Common geranium).